The following is a 286-amino-acid chain: Myb family transcription factor PHL7 (286 aa).

The HTH myb-type domain occupies H12 to Y72. Residues P43 to R68 constitute a DNA-binding region (H-T-H motif). A disordered region spans residues P74 to G97. Positions S78 to G89 are enriched in basic and acidic residues. A coiled-coil region spans residues T104–Q124. The short motif at L117 to E122 is the LHEQLE element. The interval L152–P227 is disordered.

The protein belongs to the MYB-CC family.

It is found in the nucleus. The sequence is that of Myb family transcription factor PHL7 from Arabidopsis thaliana (Mouse-ear cress).